A 359-amino-acid chain; its full sequence is MVDVANIHLPVLLDDCVNLMAPALEHENAIAVDCTLGLAGHSIAFLKAAPQARLIGIDRDSEALGLATERMEREGLADRFIPVHAAFDQLDQVLADQDIERVDAVFMDLGLSSLQIDETDRGFSYSHDAPLDMRMDVSQPLTAERILATYDAAELVRIFKEYGEERFSRQIARAIVARRDKEPFTTTAQLNRLVDEVVPQAHRPAGNPAKRVFQALRIEVNGELDKLASTLPQAANRLHVGGRLVVESYHSLEDKTVKSFMAQGLRVDVPAGLPVIPPDAQPFFTDLTRGAIKADEHEIAANPRSASVRLRAVEVSREIPSRWRKRFTQTAQGLNDVKIQGSASPGRAKNTARIRTRRG.

S-adenosyl-L-methionine contacts are provided by residues 39–41, Asp-58, Phe-87, Asp-108, and Gln-115; that span reads AGH. Residues 339–359 form a disordered region; the sequence is IQGSASPGRAKNTARIRTRRG. A compositionally biased stretch (basic residues) spans 350–359; it reads NTARIRTRRG.

This sequence belongs to the methyltransferase superfamily. RsmH family.

The protein localises to the cytoplasm. The catalysed reaction is cytidine(1402) in 16S rRNA + S-adenosyl-L-methionine = N(4)-methylcytidine(1402) in 16S rRNA + S-adenosyl-L-homocysteine + H(+). In terms of biological role, specifically methylates the N4 position of cytidine in position 1402 (C1402) of 16S rRNA. This chain is Ribosomal RNA small subunit methyltransferase H, found in Bifidobacterium longum (strain DJO10A).